We begin with the raw amino-acid sequence, 579 residues long: Probable receptor-like serine/threonine-protein kinase At5g57670 (579 aa).

Threonine 256 carries the phosphothreonine modification. A Protein kinase domain is found at 267-542 (FHQGNIVGIG…LLTNGNEAEI (276 aa)). Residues 273-281 (VGIGGYSEV) and lysine 295 contribute to the ATP site. Aspartate 392 functions as the Proton acceptor in the catalytic mechanism. Serine 396 bears the Phosphoserine mark. Phosphothreonine is present on threonine 432.

It belongs to the protein kinase superfamily. Ser/Thr protein kinase family.

It carries out the reaction L-seryl-[protein] + ATP = O-phospho-L-seryl-[protein] + ADP + H(+). The catalysed reaction is L-threonyl-[protein] + ATP = O-phospho-L-threonyl-[protein] + ADP + H(+). The protein is Probable receptor-like serine/threonine-protein kinase At5g57670 of Arabidopsis thaliana (Mouse-ear cress).